Reading from the N-terminus, the 294-residue chain is NAD kinase (294 aa).

Aspartate 74 serves as the catalytic Proton acceptor. Residues 74–75, 148–149, histidine 159, arginine 176, aspartate 178, 189–194, and glutamine 249 contribute to the NAD(+) site; these read DG, NE, and TAYSLS.

The protein belongs to the NAD kinase family. The cofactor is a divalent metal cation.

It is found in the cytoplasm. The enzyme catalyses NAD(+) + ATP = ADP + NADP(+) + H(+). Functionally, involved in the regulation of the intracellular balance of NAD and NADP, and is a key enzyme in the biosynthesis of NADP. Catalyzes specifically the phosphorylation on 2'-hydroxyl of the adenosine moiety of NAD to yield NADP. The protein is NAD kinase of Vibrio vulnificus (strain YJ016).